We begin with the raw amino-acid sequence, 675 residues long: PML-RARA-regulated adapter molecule 1 (675 aa).

Residues 1–19 (MGSNQDFRNLQAKFQTSQP) show a composition bias toward polar residues. Disordered stretches follow at residues 1 to 473 (MGSN…GPIN) and 523 to 562 (TDDSSISPRGRDEMLSTQQATRWPQQEPELRKKATQPQQL). Residues 23-35 (ELFRKTPKPELNK) are compositionally biased toward basic and acidic residues. The span at 43–58 (TELSEQPKKSSQSELS) shows a compositional bias: polar residues. Over residues 141 to 150 (PKPEFGELSK) the composition is skewed to basic and acidic residues. Polar residues-rich tracts occupy residues 224 to 242 (RKSQPQSESIEVSQTSPSK), 251 to 264 (HSPQPDISTFPKNN), and 322 to 331 (LQPSDLTRAS). Serine 374 bears the Phosphoserine mark. Residues 407–422 (SECSLPSASAGSSPQC) are compositionally biased toward polar residues. Residues 462–471 (PAKPALPPGP) are compositionally biased toward pro residues. The span at 537–546 (LSTQQATRWP) shows a compositional bias: polar residues. Positions 578–656 (KAEREFRKKF…PRTALLPLET (79 aa)) constitute an SH3 domain.

Interacts with SKAP2, LCP2 and DBNL. May interact with LYN. Interacts with NEK6. In terms of processing, may be phosphorylated on tyrosines. As to expression, expressed in bone marrow and mature neutrophils. Weakly expressed in macrophages and mast cells.

May be involved in integrin signaling in neutrophils. Binds to PtdIns(4)P. In Mus musculus (Mouse), this protein is PML-RARA-regulated adapter molecule 1 (Pram1).